A 1285-amino-acid chain; its full sequence is Period circadian protein homolog 1 (1285 aa).

Positions 1–134 (MSGPLEGADG…SSEQSARART (134 aa)) are disordered. Residues 1 to 151 (MSGPLEGADG…LRELKLRLPP (151 aa)) are interaction with BTRC. 2 stretches are compositionally biased toward low complexity: residues 48-57 (NSNGSSGNES) and 64-115 (GASQ…ASSE). A compositionally biased stretch (polar residues) spans 116–132 (QDNPSTSGCSSEQSARA). Phosphothreonine; by CSNK1E is present on Thr-121. Phosphoserine; by CSNK1E occurs at positions 122 and 126. The Nuclear export signal 1 motif lies at 138 to 147 (LMTALRELKL). PAS domains lie at 208-275 (ITSE…PFRL) and 348-414 (YEAP…KILQ). Residues 422–465 (HSPIRFCARNGEYVTMDTSWAGFVHPWSRKVAFVLGRHKVRTAP) enclose the PAC domain. Positions 489–498 (LSEQIHRLLL) match the Nuclear export signal 2 motif. 2 disordered regions span residues 503 to 544 (SSSP…PAPV) and 643 to 694 (TKRK…KEPV). Composition is skewed to low complexity over residues 523 to 533 (SPGSSSDSNGG) and 648 to 658 (ASSSSCTASSA). The required for phosphorylation by CSNK1E stretch occupies residues 592 to 811 (ELEVVPMPNQ…GLDSSSATPS (220 aa)). Ser-657, Ser-659, Ser-700, and Ser-811 each carry phosphoserine. Disordered stretches follow at residues 802–867 (GLDS…PPST) and 931–1030 (LSQA…DALS). The Nuclear localization signal signature appears at 820–836 (VPPGRRHHCRSKAKRSR). Residues 823-840 (GRRHHCRSKAKRSRHHHT) are compositionally biased toward basic residues. Pro residues predominate over residues 853 to 867 (SPVPPSGPWPPPPST). Residues 943–954 (ASHSPSPSLTPL) show a composition bias toward low complexity. Residues 967–979 (FNSRCSSPLQLNL) are compositionally biased toward polar residues. 2 positions are modified to phosphoserine: Ser-972 and Ser-973. A Nuclear export signal 3 motif is present at residues 975–982 (LQLNLLQL). The short motif at 1036-1040 (LELLL) is the LXXLL element. The span at 1045-1055 (RSGTGSAASGS) shows a compositional bias: low complexity. Disordered stretches follow at residues 1045-1091 (RSGT…SKYF) and 1202-1285 (IQDP…NSTS). Over residues 1056–1070 (LGSGLGSGSGSGSHE) the composition is skewed to gly residues. The segment covering 1071–1088 (GGSTSASITRSSQSSHTS) has biased composition (low complexity). The segment at 1142–1285 (SRDRASVLKQ…ALPAEENSTS (144 aa)) is CRY binding domain. A compositionally biased stretch (gly residues) spans 1229–1241 (GEGGGGGGGGGEG). A compositionally biased stretch (polar residues) spans 1269–1285 (GGSSSSPALPAEENSTS).

In terms of assembly, homodimer. Component of the circadian core oscillator, which includes the CRY proteins, CLOCK or NPAS2, BMAL1 or BMAL2, CSNK1D and/or CSNK1E, TIMELESS, and the PER proteins. Interacts directly with TIMELESS, PER2, PER3, CRY1 and CRY2. Interacts with BMAL1 and CLOCK. Interacts with GPRASP1. Interacts (phosphorylated) with BTRC and FBXW11; the interactions trigger proteasomal degradation. Interacts with NONO, WDR5 and SFPQ. Interacts with USP2. Interacts with HNF4A. Phosphorylated on serine residues by CSNK1D, CSNK1E and probably also by CSNK1G2. Phosphorylation by CSNK1D or CSNK1E promotes nuclear location of PER proteins as well as ubiquitination and subsequent degradation. May be dephosphorylated by PP1. In terms of processing, ubiquitinated; requires phosphorylation by CSNK1E and interaction with BTRC and FBXW11. Deubiquitinated by USP2. In terms of tissue distribution, expressed in the brain, mainly in the suprachiasmatic nucleus (SCN). Expression also found in the harderian gland, lung, eye, intestine, liver and skeletal muscle.

The protein localises to the nucleus. It localises to the cytoplasm. In terms of biological role, transcriptional repressor which forms a core component of the circadian clock. The circadian clock, an internal time-keeping system, regulates various physiological processes through the generation of approximately 24 hour circadian rhythms in gene expression, which are translated into rhythms in metabolism and behavior. It is derived from the Latin roots 'circa' (about) and 'diem' (day) and acts as an important regulator of a wide array of physiological functions including metabolism, sleep, body temperature, blood pressure, endocrine, immune, cardiovascular, and renal function. Consists of two major components: the central clock, residing in the suprachiasmatic nucleus (SCN) of the brain, and the peripheral clocks that are present in nearly every tissue and organ system. Both the central and peripheral clocks can be reset by environmental cues, also known as Zeitgebers (German for 'timegivers'). The predominant Zeitgeber for the central clock is light, which is sensed by retina and signals directly to the SCN. The central clock entrains the peripheral clocks through neuronal and hormonal signals, body temperature and feeding-related cues, aligning all clocks with the external light/dark cycle. Circadian rhythms allow an organism to achieve temporal homeostasis with its environment at the molecular level by regulating gene expression to create a peak of protein expression once every 24 hours to control when a particular physiological process is most active with respect to the solar day. Transcription and translation of core clock components (CLOCK, NPAS2, BMAL1, BMAL2, PER1, PER2, PER3, CRY1 and CRY2) plays a critical role in rhythm generation, whereas delays imposed by post-translational modifications (PTMs) are important for determining the period (tau) of the rhythms (tau refers to the period of a rhythm and is the length, in time, of one complete cycle). A diurnal rhythm is synchronized with the day/night cycle, while the ultradian and infradian rhythms have a period shorter and longer than 24 hours, respectively. Disruptions in the circadian rhythms contribute to the pathology of cardiovascular diseases, cancer, metabolic syndromes and aging. A transcription/translation feedback loop (TTFL) forms the core of the molecular circadian clock mechanism. Transcription factors, CLOCK or NPAS2 and BMAL1 or BMAL2, form the positive limb of the feedback loop, act in the form of a heterodimer and activate the transcription of core clock genes and clock-controlled genes (involved in key metabolic processes), harboring E-box elements (5'-CACGTG-3') within their promoters. The core clock genes: PER1/2/3 and CRY1/2 which are transcriptional repressors form the negative limb of the feedback loop and interact with the CLOCK|NPAS2-BMAL1|BMAL2 heterodimer inhibiting its activity and thereby negatively regulating their own expression. This heterodimer also activates nuclear receptors NR1D1/2 and RORA/B/G, which form a second feedback loop and which activate and repress BMAL1 transcription, respectively. Regulates circadian target genes expression at post-transcriptional levels, but may not be required for the repression at transcriptional level. Controls PER2 protein decay. Represses CRY2 preventing its repression on CLOCK/BMAL1 target genes such as FXYD5 and SCNN1A in kidney and PPARA in liver. Besides its involvement in the maintenance of the circadian clock, has an important function in the regulation of several processes. Participates in the repression of glucocorticoid receptor NR3C1/GR-induced transcriptional activity by reducing the association of NR3C1/GR to glucocorticoid response elements (GREs) by BMAL1:CLOCK. Plays a role in the modulation of the neuroinflammatory state via the regulation of inflammatory mediators release, such as CCL2 and IL6. In spinal astrocytes, negatively regulates the MAPK14/p38 and MAPK8/JNK MAPK cascades as well as the subsequent activation of NFkappaB. Coordinately regulates the expression of multiple genes that are involved in the regulation of renal sodium reabsorption. Can act as gene expression activator in a gene and tissue specific manner, in kidney enhances WNK1 and SLC12A3 expression in collaboration with CLOCK. Modulates hair follicle cycling. Represses the CLOCK-BMAL1 induced transcription of BHLHE40/DEC1. In Spalax judaei (Judean Mountains blind mole rat), this protein is Period circadian protein homolog 1 (PER1).